A 275-amino-acid chain; its full sequence is MIGVVVLGATGRMGRRICRMVIEDEELELVGAIASPTSKHLGRDVGLVIGVGETGVEIAPPTALPNIAKDADVAIDFTVREATLENAPKAARAGLDLVIGTTGFSDEDLRVLEHEIEEAGVSAVISPNMSLGVNLLFELTRQLARVLGDNGFDFEIVEIHHRHKVDAPSGTALELAAIIEEELGKGEKVFGREGNVGPRDDDEIGVLAVRGGEVVGDHTVMALGEYERIELTHRALSRDAFAKGALVAAKFVVEAPPGIYSMRDVLFGGKRGEGL.

Residues 8 to 13 (GATGRM), 100 to 102 (GTT), and 126 to 129 (SPNM) contribute to the NAD(+) site. Residue histidine 160 is the Proton donor/acceptor of the active site. A (S)-2,3,4,5-tetrahydrodipicolinate-binding site is contributed by histidine 161. Residue lysine 164 is the Proton donor of the active site. 170-171 (GT) contributes to the (S)-2,3,4,5-tetrahydrodipicolinate binding site.

This sequence belongs to the DapB family.

It localises to the cytoplasm. The enzyme catalyses (S)-2,3,4,5-tetrahydrodipicolinate + NAD(+) + H2O = (2S,4S)-4-hydroxy-2,3,4,5-tetrahydrodipicolinate + NADH + H(+). It carries out the reaction (S)-2,3,4,5-tetrahydrodipicolinate + NADP(+) + H2O = (2S,4S)-4-hydroxy-2,3,4,5-tetrahydrodipicolinate + NADPH + H(+). It functions in the pathway amino-acid biosynthesis; L-lysine biosynthesis via DAP pathway; (S)-tetrahydrodipicolinate from L-aspartate: step 4/4. Catalyzes the conversion of 4-hydroxy-tetrahydrodipicolinate (HTPA) to tetrahydrodipicolinate. This is 4-hydroxy-tetrahydrodipicolinate reductase from Methanopyrus kandleri (strain AV19 / DSM 6324 / JCM 9639 / NBRC 100938).